A 306-amino-acid polypeptide reads, in one-letter code: Ribosomal protein L11 methyltransferase (306 aa).

The S-adenosyl-L-methionine site is built by threonine 154, glycine 179, aspartate 201, and asparagine 242.

It belongs to the methyltransferase superfamily. PrmA family.

The protein resides in the cytoplasm. The enzyme catalyses L-lysyl-[protein] + 3 S-adenosyl-L-methionine = N(6),N(6),N(6)-trimethyl-L-lysyl-[protein] + 3 S-adenosyl-L-homocysteine + 3 H(+). In terms of biological role, methylates ribosomal protein L11. The sequence is that of Ribosomal protein L11 methyltransferase from Xylella fastidiosa (strain 9a5c).